The following is a 214-amino-acid chain: Small ribosomal subunit protein eS6 (214 aa).

The protein belongs to the eukaryotic ribosomal protein eS6 family.

In Saccharolobus islandicus (strain Y.G.57.14 / Yellowstone #1) (Sulfolobus islandicus), this protein is Small ribosomal subunit protein eS6 (rps6e).